The sequence spans 280 residues: 4-diphosphocytidyl-2-C-methyl-D-erythritol kinase (280 aa).

Residue Lys8 is part of the active site. An ATP-binding site is contributed by 91-101; the sequence is PVAAGLAGGST. The active site involves Asp133.

Belongs to the GHMP kinase family. IspE subfamily.

The enzyme catalyses 4-CDP-2-C-methyl-D-erythritol + ATP = 4-CDP-2-C-methyl-D-erythritol 2-phosphate + ADP + H(+). It participates in isoprenoid biosynthesis; isopentenyl diphosphate biosynthesis via DXP pathway; isopentenyl diphosphate from 1-deoxy-D-xylulose 5-phosphate: step 3/6. In terms of biological role, catalyzes the phosphorylation of the position 2 hydroxy group of 4-diphosphocytidyl-2C-methyl-D-erythritol. The sequence is that of 4-diphosphocytidyl-2-C-methyl-D-erythritol kinase from Clostridium botulinum (strain 657 / Type Ba4).